Here is a 114-residue protein sequence, read N- to C-terminus: Large ribosomal subunit protein bL19 (114 aa).

The protein belongs to the bacterial ribosomal protein bL19 family.

Its function is as follows. This protein is located at the 30S-50S ribosomal subunit interface and may play a role in the structure and function of the aminoacyl-tRNA binding site. The protein is Large ribosomal subunit protein bL19 (rplS) of Listeria monocytogenes serovar 1/2a (strain ATCC BAA-679 / EGD-e).